Consider the following 347-residue polypeptide: N-acetyl-gamma-glutamyl-phosphate reductase (347 aa).

The active site involves C152.

This sequence belongs to the NAGSA dehydrogenase family. Type 1 subfamily.

The protein localises to the cytoplasm. The enzyme catalyses N-acetyl-L-glutamate 5-semialdehyde + phosphate + NADP(+) = N-acetyl-L-glutamyl 5-phosphate + NADPH + H(+). It participates in amino-acid biosynthesis; L-arginine biosynthesis; N(2)-acetyl-L-ornithine from L-glutamate: step 3/4. Functionally, catalyzes the NADPH-dependent reduction of N-acetyl-5-glutamyl phosphate to yield N-acetyl-L-glutamate 5-semialdehyde. This Neisseria gonorrhoeae (strain NCCP11945) protein is N-acetyl-gamma-glutamyl-phosphate reductase.